Consider the following 311-residue polypeptide: Putative dihydroorotate dehydrogenase A (fumarate) (311 aa).

Residues Lys-45, 69 to 73, and Asn-128 each bind substrate; that span reads NSMGL. FMN is bound at residue 45–46; that stretch reads KT. Asn-128 provides a ligand contact to FMN. Cys-131 acts as the Nucleophile in catalysis. 2 residues coordinate FMN: Lys-165 and Val-193. Position 194–195 (194–195) interacts with substrate; that stretch reads NS. FMN-binding positions include Gly-220, 248–249, and 270–271; these read GG and GT.

The protein belongs to the dihydroorotate dehydrogenase family. Type 1 subfamily. As to quaternary structure, homodimer. Requires FMN as cofactor.

Its subcellular location is the cytoplasm. It carries out the reaction (S)-dihydroorotate + fumarate = orotate + succinate. It participates in pyrimidine metabolism; UMP biosynthesis via de novo pathway. Functionally, catalyzes the conversion of dihydroorotate to orotate with fumarate as the electron acceptor. In Streptococcus equi subsp. equi (strain 4047), this protein is Putative dihydroorotate dehydrogenase A (fumarate) (pyrD).